A 25-amino-acid polypeptide reads, in one-letter code: Panurgine R (25 aa).

2 disulfide bridges follow: C8–C23 and C11–C19.

It localises to the target cell membrane. Its subcellular location is the secreted. Antimicrobial peptide active against Gram-positive bacteria M.luteus (MIC=0.8 uM) and B.subtilis (MIC=1.5 uM). Less active against Gram-negative bacteria E.coli (MIC=32.5 uM) and yeast C.albicans (MIC=18.7 uM). Not active against S.aureus and P.aeruginosa. Has no hemolytic activity against human erythrocytes. Probably acts by disrupting membranes of target cells. The sequence is that of Panurgine R from Panurgus calcaratus (Solitary bee).